Consider the following 354-residue polypeptide: Sphingosine-1-phosphate phosphatase 2 (354 aa).

4 helical membrane passes run 43 to 63, 76 to 96, 115 to 135, and 140 to 160; these read YLFR…FLPF, LVVI…ILKW, YGMP…LLIS, and YQYP…LVCL. The tract at residues 91–99 is phosphatase sequence motif I; the sequence is KDILKWPRP. Residues 118 to 121 form a phosphatase sequence motif II region; sequence PSTH. The active-site Proton donor is His-121. The interval 161 to 172 is phosphatase sequence motif III; sequence SRLYTGMHTVLD. His-168 (nucleophile) is an active-site residue. 5 helical membrane-spanning segments follow: residues 173-193, 202-222, 235-255, 273-293, and 334-354; these read ILGG…AWTL, PLFP…YPVS, IVAA…FQLV, TDML…ILLV, and TSVG…LGLL.

This sequence belongs to the type 2 lipid phosphate phosphatase family. Highly expressed in pancreatic islets. Expressed in lung, small interstince, colon, kideny and brain.

It is found in the endoplasmic reticulum membrane. The catalysed reaction is sphinganine 1-phosphate + H2O = sphinganine + phosphate. It carries out the reaction sphing-4-enine 1-phosphate + H2O = sphing-4-enine + phosphate. It catalyses the reaction (4R)-hydroxysphinganine 1-phosphate + H2O = (4R)-hydroxysphinganine + phosphate. Functionally, has specific phosphohydrolase activity towards sphingoid base 1-phosphates. Has high phosphohydrolase activity against dihydrosphingosine-1-phosphate and sphingosine-1-phosphate (S1P) in vitro. Sphingosine-1-phosphate phosphatase activity is needed for efficient recycling of sphingosine into the sphingolipid synthesis pathway. May play a role in attenuating intracellular sphingosine 1-phosphate (S1P) signaling. May play a role in pro-inflammatory signaling. Plays a role in the regulation of pancreatic islet beta-cell endoplasmic reticulum stress and proliferation. The protein is Sphingosine-1-phosphate phosphatase 2 of Mus musculus (Mouse).